We begin with the raw amino-acid sequence, 481 residues long: Protein FIZZY-RELATED 3 (481 aa).

Residues 100-165 are disordered; that stretch reads PAGGQGSASS…RKVPKTPHKV (66 aa). A compositionally biased stretch (low complexity) spans 125–136; that stretch reads SNSSPSSPFSPS. Positions 154–163 are enriched in basic residues; sequence PPRKVPKTPH. WD repeat units follow at residues 172-209, 213-252, 255-292, 296-335, 338-380, 382-423, and 426-465; these read QDDFYLNVVDWSSQNVLAVGLGTCVYLWTASNSKVTKL, GPNDSVCSVQWTREGSYISIGTSHGQVQVWDGTQCKRVRT, GHQTRTGVLAWNSRILSSGSRDRNILQHDIRVQSDFVS, GHKSEVCGLKWSHDDRELASGGNDNQLLVWNNHSQQPILK, EHTA…QLNS, DTGS…KVAT, and GHSMRVLYLATSPDGQTIVTGAGDETLRFWNVFPSVKMQT.

Belongs to the WD repeat CDC20/Fizzy family. As to quaternary structure, associates with the APC/C complex. Interacts with CDC20-1, CDC20-2, CYCA1-1, CYCA3-4, CYCB1-1 and CYCB1-2. Binds to GIG1 and PYM.

It participates in protein modification; protein ubiquitination. In terms of biological role, activator protein that regulates the ubiquitin ligase activity and substrate specificity of the anaphase promoting complex/cyclosome (APC/C). This chain is Protein FIZZY-RELATED 3 (FZR3), found in Arabidopsis thaliana (Mouse-ear cress).